A 1176-amino-acid chain; its full sequence is DNA-directed RNA polymerase subunit beta (1176 aa).

Residues 13–30 (TDASLHQGRPQSSSNSSV) are compositionally biased toward polar residues. Positions 13 to 35 (TDASLHQGRPQSSSNSSVPGAPN) are disordered.

It belongs to the RNA polymerase beta chain family. The RNAP catalytic core consists of 2 alpha, 1 beta, 1 beta' and 1 omega subunit. When a sigma factor is associated with the core the holoenzyme is formed, which can initiate transcription.

The enzyme catalyses RNA(n) + a ribonucleoside 5'-triphosphate = RNA(n+1) + diphosphate. Its function is as follows. DNA-dependent RNA polymerase catalyzes the transcription of DNA into RNA using the four ribonucleoside triphosphates as substrates. The sequence is that of DNA-directed RNA polymerase subunit beta from Mycobacterium marinum (strain ATCC BAA-535 / M).